Reading from the N-terminus, the 345-residue chain is Selenide, water dikinase (345 aa).

Residue cysteine 15 is part of the active site. Residues lysine 18 and 46 to 48 contribute to the ATP site; that span reads SKD. Aspartate 49 provides a ligand contact to Mg(2+). Residues aspartate 66, aspartate 89, and 137–139 each bind ATP; that span reads GHS. Aspartate 89 lines the Mg(2+) pocket. Aspartate 225 lines the Mg(2+) pocket.

The protein belongs to the selenophosphate synthase 1 family. Class I subfamily. In terms of assembly, homodimer. Mg(2+) is required as a cofactor.

The enzyme catalyses hydrogenselenide + ATP + H2O = selenophosphate + AMP + phosphate + 2 H(+). Its function is as follows. Synthesizes selenophosphate from selenide and ATP. The polypeptide is Selenide, water dikinase (Aeromonas hydrophila subsp. hydrophila (strain ATCC 7966 / DSM 30187 / BCRC 13018 / CCUG 14551 / JCM 1027 / KCTC 2358 / NCIMB 9240 / NCTC 8049)).